Reading from the N-terminus, the 330-residue chain is G-protein coupled receptor 3 (330 aa).

The Extracellular portion of the chain corresponds to 1 to 42 (MMWGAGSSMAWFSAGSGSVNVSSVDPVEEPTGPATLLPSPRA). N20 carries an N-linked (GlcNAc...) asparagine glycan. The chain crosses the membrane as a helical span at residues 43 to 62 (WDVVLCISGTLVSCENALVV). Residues 63 to 74 (AIIVGTPAFRAP) are Cytoplasmic-facing. A helical membrane pass occupies residues 75-98 (MFLLVGSLAVADLLAGLGLVLHFA). Topologically, residues 99–110 (ADFCIGSPEMSL) are extracellular. Residues 111–132 (MLVGVLAMAFTASIGSLLAITV) form a helical membrane-spanning segment. At 133–153 (DRYLSLYNALTYYSETTVTRT) the chain is on the cytoplasmic side. A helical transmembrane segment spans residues 154–173 (YVMLALVWVGALGLGLVPVL). The Extracellular segment spans residues 174–198 (AWNCRDGLTTCGVVYPLSKNHLVVL). A helical transmembrane segment spans residues 199–217 (AIAFFMVFGIMLQLYAQIC). The Cytoplasmic portion of the chain corresponds to 218–245 (RIVCRHAQQIALQRHLLPASHYVATRKG). Residues 246–272 (IATLAVVLGAFAACWLPFTVYCLLGDA) traverse the membrane as a helical segment. The Extracellular portion of the chain corresponds to 273–277 (DSPRL). The helical transmembrane segment at 278 to 299 (YTYLTLLPATYNSMINPVIYAF) threads the bilayer. Topologically, residues 300 to 330 (RNQDVQKVLWAICCCCSTSKIPFRSRSPSDV) are cytoplasmic. C313 is lipidated: S-palmitoyl cysteine. A phosphoserine mark is found at S324, S326, and S328.

The protein belongs to the G-protein coupled receptor 1 family. As to expression, expressed in both the forebrain and hindbrain, with the highest level in habenula. Lower level expression in the testis. Expressed in several metabolically active peripheral tissues, although at lower levels than in the central nervous system (CNS).

The protein resides in the cell membrane. Functionally, constitutively active G-protein coupled receptor that maintains high 3'-5'-cyclic adenosine monophosphate (cAMP) levels that a plays a role in serveral processes including meiotic arrest in oocytes or neuronal development via activation of numerous intracellular signaling pathways. Acts as an essential activator of thermogenic adipocytes and drives thermogenesis via its intrinsic G(s)-coupling activity without the requirement of a ligand. Has a potential role in modulating a number of brain functions, including behavioral responses to stress, amyloid-beta peptide generation in neurons. Stimulates neurite outgrowth in cerebellar granular neurons modulated via PKA, ERK, and most strongly PI3K-mediated signaling pathways. This is G-protein coupled receptor 3 (Gpr3) from Mus musculus (Mouse).